The following is a 182-amino-acid chain: Transcription termination/antitermination protein NusG (182 aa).

The protein belongs to the NusG family.

In terms of biological role, participates in transcription elongation, termination and antitermination. This is Transcription termination/antitermination protein NusG from Chlamydia trachomatis serovar D (strain ATCC VR-885 / DSM 19411 / UW-3/Cx).